Here is a 150-residue protein sequence, read N- to C-terminus: UPF0756 membrane protein plu2726 (150 aa).

Transmembrane regions (helical) follow at residues 8 to 28 (LLVL…TVTL), 51 to 71 (YGLT…IASG), 88 to 108 (LLAI…VSLM), and 123 to 143 (VLGV…AGIL).

The protein belongs to the UPF0756 family.

It localises to the cell membrane. This chain is UPF0756 membrane protein plu2726, found in Photorhabdus laumondii subsp. laumondii (strain DSM 15139 / CIP 105565 / TT01) (Photorhabdus luminescens subsp. laumondii).